The following is a 323-amino-acid chain: Acetyl-coenzyme A carboxylase carboxyl transferase subunit alpha (323 aa).

One can recognise a CoA carboxyltransferase C-terminal domain in the interval 39–293; that stretch reads RLSKKSQQLT…RRALADSLRQ (255 aa).

It belongs to the AccA family. In terms of assembly, acetyl-CoA carboxylase is a heterohexamer composed of biotin carboxyl carrier protein (AccB), biotin carboxylase (AccC) and two subunits each of ACCase subunit alpha (AccA) and ACCase subunit beta (AccD).

The protein resides in the cytoplasm. The enzyme catalyses N(6)-carboxybiotinyl-L-lysyl-[protein] + acetyl-CoA = N(6)-biotinyl-L-lysyl-[protein] + malonyl-CoA. The protein operates within lipid metabolism; malonyl-CoA biosynthesis; malonyl-CoA from acetyl-CoA: step 1/1. Its function is as follows. Component of the acetyl coenzyme A carboxylase (ACC) complex. First, biotin carboxylase catalyzes the carboxylation of biotin on its carrier protein (BCCP) and then the CO(2) group is transferred by the carboxyltransferase to acetyl-CoA to form malonyl-CoA. The polypeptide is Acetyl-coenzyme A carboxylase carboxyl transferase subunit alpha (Burkholderia vietnamiensis (strain G4 / LMG 22486) (Burkholderia cepacia (strain R1808))).